The chain runs to 1022 residues: Sodium/potassium-transporting ATPase subunit alpha-1 (1022 aa).

The propeptide occupies 1–5 (MGRGT). The segment covering 1–10 (MGRGTGHDQY) has biased composition (basic and acidic residues). Residues 1–34 (MGRGTGHDQYELAATSEGGRKKKRDKKKKDMDDL) form a disordered region. At 6-86 (GHDQYELAAT…NALTPPPTTP (81 aa)) the chain is on the cytoplasmic side. The residue at position 16 (Ser16) is a Phosphoserine; by PKC. The tract at residues 81–83 (PPP) is interaction with phosphoinositide-3 kinase. Residues 87 to 107 (EWVKFCRQLFGGFSMLLWIGA) form a helical membrane-spanning segment. The Extracellular segment spans residues 108 to 130 (ILCFLAYGIQAASEDEPANDNLY). Residues 131–151 (LGVVLSAVVIITGCFSYYQEA) form a helical membrane-spanning segment. At 152–287 (KSSRIMDSFK…VGRTPISIEI (136 aa)) the chain is on the cytoplasmic side. Residues 213 to 234 (DNSSLTGESEPQTRSPDFSNEN) form a disordered region. The helical transmembrane segment at 288-307 (EHFIHIITGVAVFLGVSFFI) threads the bilayer. At 308-319 (LSLILGYAWLEA) the chain is on the extracellular side. The helical transmembrane segment at 320–337 (VIFLIGIIVANVPEGLLA) threads the bilayer. Over 338–771 (TVTVCLTLTA…EEGRLIFDNL (434 aa)) the chain is Cytoplasmic. Asp375 acts as the 4-aspartylphosphate intermediate in catalysis. Lys486 serves as a coordination point for ATP. Mg(2+) contacts are provided by Asp716 and Asp720. The chain crosses the membrane as a helical span at residues 772–791 (KKSIAYTLTSNIPEITPFLL). Residues 792-801 (FIIANIPLPL) lie on the Extracellular side of the membrane. A helical membrane pass occupies residues 802–822 (GTVTILCIDLGTDMVPAISLA). Residues 823 to 842 (YEAAESDIMKRQPRNPRTDK) are Cytoplasmic-facing. The chain crosses the membrane as a helical span at residues 843-865 (LVNERLISIAYGQIGMMQATAGF). Over 866–917 (FTYFVILAENGFLPSTLLGIRVKWDDKYVNDLEDSYGQQWTYEQRKIVEYTC) the chain is Extracellular. A helical membrane pass occupies residues 918 to 937 (HTSFFASIVIVQWADLIICK). Residues 938–950 (TRRNSIIQQGMKN) lie on the Cytoplasmic side of the membrane. A Phosphoserine; by PKA modification is found at Ser942. The chain crosses the membrane as a helical span at residues 951–969 (KILIFGLFEETALAAFLSY). Residues 970-984 (CPGMDVALRMYPLKP) lie on the Extracellular side of the membrane. A helical transmembrane segment spans residues 985–1005 (SWWFCAFPYSLLIFLYDEARR). Residues 1006–1022 (FILRRNPDGWVERETYY) lie on the Cytoplasmic side of the membrane.

This sequence belongs to the cation transport ATPase (P-type) (TC 3.A.3) family. Type IIC subfamily. In terms of assembly, the sodium/potassium-transporting ATPase is composed of a catalytic alpha subunit, an auxiliary non-catalytic beta subunit and an additional regulatory subunit.

It is found in the cell membrane. It localises to the sarcolemma. It catalyses the reaction K(+)(out) + Na(+)(in) + ATP + H2O = K(+)(in) + Na(+)(out) + ADP + phosphate + H(+). In terms of biological role, this is the catalytic component of the active enzyme, which catalyzes the hydrolysis of ATP coupled with the exchange of sodium and potassium ions across the plasma membrane. This action creates the electrochemical gradient of sodium and potassium ions, providing the energy for active transport of various nutrients. This Anguilla anguilla (European freshwater eel) protein is Sodium/potassium-transporting ATPase subunit alpha-1 (atp1a1).